The following is a 131-amino-acid chain: MAEPDYIEDDNPELIRPQKLINPVKTSRNHQDLHRELLMNQKRGLAPQNKPELQKVMEKRKRDQVIKQKEEEAQKKKSDLEIELLKRQQKLEQLELEKQKLQEEQENAPEFVKVKGNLRRTGQEVAQAQES.

Alanine 2 bears the N-acetylalanine mark. Disordered regions lie at residues 39 to 78 (MNQK…KKKS) and 100 to 131 (KLQE…AQES). The residue at position 50 (lysine 50) is an N6-acetyllysine. The span at 52–78 (ELQKVMEKRKRDQVIKQKEEEAQKKKS) shows a compositional bias: basic and acidic residues. Positions 61–112 (KRDQVIKQKEEEAQKKKSDLEIELLKRQQKLEQLELEKQKLQEEQENAPEFV) form a coiled coil.

It belongs to the FAM107 family.

The chain is Protein FAM107B from Homo sapiens (Human).